The sequence spans 706 residues: Fatty acid oxidation complex subunit alpha (706 aa).

Residues 1 to 188 (MDKSFTLNRL…KMGLVDDVVP (188 aa)) form an enoyl-CoA hydratase region. The interval 308-706 (KAVNKVMVLG…MAESGSKFYE (399 aa)) is 3-hydroxyacyl-CoA dehydrogenase.

The protein in the N-terminal section; belongs to the enoyl-CoA hydratase/isomerase family. In the central section; belongs to the 3-hydroxyacyl-CoA dehydrogenase family. In terms of assembly, heterotetramer of two alpha chains (FadJ) and two beta chains (FadI).

Its subcellular location is the cytoplasm. It carries out the reaction a (3S)-3-hydroxyacyl-CoA = a (2E)-enoyl-CoA + H2O. It catalyses the reaction a 4-saturated-(3S)-3-hydroxyacyl-CoA = a (3E)-enoyl-CoA + H2O. The catalysed reaction is a (3S)-3-hydroxyacyl-CoA + NAD(+) = a 3-oxoacyl-CoA + NADH + H(+). The enzyme catalyses (3S)-3-hydroxybutanoyl-CoA = (3R)-3-hydroxybutanoyl-CoA. The protein operates within lipid metabolism; fatty acid beta-oxidation. Its function is as follows. Catalyzes the formation of a hydroxyacyl-CoA by addition of water on enoyl-CoA. Also exhibits 3-hydroxyacyl-CoA epimerase and 3-hydroxyacyl-CoA dehydrogenase activities. This is Fatty acid oxidation complex subunit alpha from Shewanella loihica (strain ATCC BAA-1088 / PV-4).